The chain runs to 214 residues: Intermembrane phospholipid transport system binding protein MlaC (214 aa).

A signal peptide spans 1-28; it reads MNLIQLKKWFTILTFVLTAFLVTRTAIA.

Belongs to the MlaC/ttg2D family.

Its subcellular location is the periplasm. Its function is as follows. Involved in a phospholipid transport pathway that maintains lipid asymmetry in the outer membrane by retrograde trafficking of phospholipids from the outer membrane to the inner membrane. May transfer phospholipid across the periplasmic space and deliver it to the MlaFEDB complex at the inner membrane. This chain is Intermembrane phospholipid transport system binding protein MlaC, found in Haemophilus influenzae (strain ATCC 51907 / DSM 11121 / KW20 / Rd).